The chain runs to 284 residues: Nucleotide-binding protein Pput_0988 (284 aa).

8 to 15 (GRSGSGKS) provides a ligand contact to ATP. 60-63 (DARN) lines the GTP pocket.

It belongs to the RapZ-like family.

Displays ATPase and GTPase activities. The sequence is that of Nucleotide-binding protein Pput_0988 from Pseudomonas putida (strain ATCC 700007 / DSM 6899 / JCM 31910 / BCRC 17059 / LMG 24140 / F1).